Consider the following 102-residue polypeptide: Parathymosin (102 aa).

The segment at 1–102 (MSEKSVEAAA…RQKTENGASA (102 aa)) is disordered. The residue at position 2 (Ser-2) is an N-acetylserine. A Phosphoserine modification is found at Ser-2. At Lys-4 the chain carries N6-acetyllysine. 2 positions are modified to phosphoserine: Ser-5 and Ser-13. The span at 13-37 (SAKDLKEKKEKVEEKAGRKERKKEV) shows a compositional bias: basic and acidic residues. Lys-15 is modified (N6-acetyllysine). A compositionally biased stretch (acidic residues) spans 38–76 (VEEEENGAEEEEEETAEDGEEEDDGDEEDEEEEEEEDEG). Phosphothreonine is present on Thr-52. Lys-92 carries the N6-acetyllysine modification.

This sequence belongs to the pro/parathymosin family.

Parathymosin may mediate immune function by blocking the effect of prothymosin alpha which confers resistance to certain opportunistic infections. This is Parathymosin (PTMS) from Bos taurus (Bovine).